Reading from the N-terminus, the 257-residue chain is Tryptophan synthase alpha chain (257 aa).

Active-site proton acceptor residues include E47 and D58.

Belongs to the TrpA family. As to quaternary structure, tetramer of two alpha and two beta chains.

It carries out the reaction (1S,2R)-1-C-(indol-3-yl)glycerol 3-phosphate + L-serine = D-glyceraldehyde 3-phosphate + L-tryptophan + H2O. The protein operates within amino-acid biosynthesis; L-tryptophan biosynthesis; L-tryptophan from chorismate: step 5/5. The alpha subunit is responsible for the aldol cleavage of indoleglycerol phosphate to indole and glyceraldehyde 3-phosphate. In Listeria monocytogenes serotype 4b (strain F2365), this protein is Tryptophan synthase alpha chain.